The primary structure comprises 595 residues: Leiomodin-1 (595 aa).

3 disordered regions span residues methionine 1–leucine 69, glutamine 81–asparagine 322, and aspartate 467–asparagine 568. Serine 12 bears the Phosphoserine mark. The segment covering glutamate 27 to aspartate 40 has biased composition (acidic residues). Basic and acidic residues-rich tracts occupy residues glutamine 81–arginine 110, glutamine 117–lysine 127, phenylalanine 134–glycine 192, serine 200–alanine 223, glycine 230–aspartate 249, arginine 257–glutamate 287, aspartate 467–glutamate 476, and serine 484–valine 493. Position 85 is a phosphoserine (serine 85). Position 135 is a phosphoserine (serine 135). A run of 8 repeats spans residues alanine 165–glutamate 179, arginine 180–lysine 195, asparagine 196–lysine 211, glutamate 212–arginine 226, asparagine 227–serine 240, lysine 242–glycine 255, glycine 256–asparagine 271, and glutamine 272–lysine 288. Residues alanine 165–lysine 288 form an 8 X approximate tandem repeats region. The tract at residues serine 503–lysine 522 is 5 X 4 AA approximate tandem repeats. Pro residues-rich tracts occupy residues lysine 505–lysine 517 and alanine 527–proline 538. Position 550 is a phosphoserine (serine 550). Positions serine 569–valine 588 constitute a WH2 domain.

It belongs to the tropomodulin family. As to expression, detected in aorta, urinary bladder and uterus (at protein level). Detected in smooth muscle cells. Detected in aorta, bladder, colon, intestine, stomach and uterus.

It localises to the cytoplasm. Its subcellular location is the myofibril. The protein localises to the sarcomere. It is found in the cytoskeleton. Required for proper contractility of visceral smooth muscle cells. Mediates nucleation of actin filaments. The chain is Leiomodin-1 (Lmod1) from Mus musculus (Mouse).